The sequence spans 426 residues: Putative acid phosphatase 1 (426 aa).

Residues M1–A18 form the signal peptide. Topologically, residues Q19–W388 are extracellular. The active-site Nucleophile is H29. N37 and N145 each carry an N-linked (GlcNAc...) asparagine glycan. Residues C133 and C369 are joined by a disulfide bond. Residue D276 is the Proton donor of the active site. N-linked (GlcNAc...) asparagine glycosylation is present at N380. Residues I389–V409 traverse the membrane as a helical segment. Over R410–N426 the chain is Cytoplasmic.

This sequence belongs to the histidine acid phosphatase family.

It is found in the membrane. It catalyses the reaction a phosphate monoester + H2O = an alcohol + phosphate. This chain is Putative acid phosphatase 1, found in Caenorhabditis briggsae.